Consider the following 109-residue polypeptide: Cell division protein ZapA (109 aa).

The stretch at 21 to 100 (PDQRDALNQA…EQALLERGRI (80 aa)) forms a coiled coil.

Belongs to the ZapA family. Type 1 subfamily. As to quaternary structure, homodimer. Interacts with FtsZ.

The protein resides in the cytoplasm. Functionally, activator of cell division through the inhibition of FtsZ GTPase activity, therefore promoting FtsZ assembly into bundles of protofilaments necessary for the formation of the division Z ring. It is recruited early at mid-cell but it is not essential for cell division. The protein is Cell division protein ZapA of Shigella dysenteriae serotype 1 (strain Sd197).